The chain runs to 293 residues: 4-hydroxy-tetrahydrodipicolinate synthase (293 aa).

A pyruvate-binding site is contributed by threonine 44. The active-site Proton donor/acceptor is the tyrosine 132. Catalysis depends on lysine 161, which acts as the Schiff-base intermediate with substrate. Isoleucine 205 provides a ligand contact to pyruvate.

Belongs to the DapA family. In terms of assembly, homotetramer; dimer of dimers.

It localises to the cytoplasm. The enzyme catalyses L-aspartate 4-semialdehyde + pyruvate = (2S,4S)-4-hydroxy-2,3,4,5-tetrahydrodipicolinate + H2O + H(+). It participates in amino-acid biosynthesis; L-lysine biosynthesis via DAP pathway; (S)-tetrahydrodipicolinate from L-aspartate: step 3/4. Catalyzes the condensation of (S)-aspartate-beta-semialdehyde [(S)-ASA] and pyruvate to 4-hydroxy-tetrahydrodipicolinate (HTPA). The sequence is that of 4-hydroxy-tetrahydrodipicolinate synthase from Thermosipho africanus (strain TCF52B).